A 94-amino-acid chain; its full sequence is HssA/B-like protein 51 (94 aa).

Residues M1–G25 are disordered.

This sequence belongs to the hssA/B family.

The protein is HssA/B-like protein 51 (hssl51) of Dictyostelium discoideum (Social amoeba).